The following is a 375-amino-acid chain: Succinyl-diaminopimelate desuccinylase (375 aa).

A Zn(2+)-binding site is contributed by histidine 66. Aspartate 68 is a catalytic residue. Residue aspartate 99 participates in Zn(2+) binding. Glutamate 133 serves as the catalytic Proton acceptor. 3 residues coordinate Zn(2+): glutamate 134, glutamate 162, and histidine 348.

This sequence belongs to the peptidase M20A family. DapE subfamily. As to quaternary structure, homodimer. Requires Zn(2+) as cofactor. The cofactor is Co(2+).

It carries out the reaction N-succinyl-(2S,6S)-2,6-diaminopimelate + H2O = (2S,6S)-2,6-diaminopimelate + succinate. The protein operates within amino-acid biosynthesis; L-lysine biosynthesis via DAP pathway; LL-2,6-diaminopimelate from (S)-tetrahydrodipicolinate (succinylase route): step 3/3. Its function is as follows. Catalyzes the hydrolysis of N-succinyl-L,L-diaminopimelic acid (SDAP), forming succinate and LL-2,6-diaminopimelate (DAP), an intermediate involved in the bacterial biosynthesis of lysine and meso-diaminopimelic acid, an essential component of bacterial cell walls. This chain is Succinyl-diaminopimelate desuccinylase, found in Shigella sonnei (strain Ss046).